The primary structure comprises 2116 residues: Myosin-2 heavy chain (2116 aa).

Positions 30–82 (SDKRYIWYNPDPKERDSYECGEIVSETSDSFTFKTVDGQDRQVKKDDANQRNP) constitute a Myosin N-terminal SH3-like domain. The region spanning 86–759 (DGVEDMSELS…QLARIEEARE (674 aa)) is the Myosin motor domain. At Lys130 the chain carries N6,N6-dimethyllysine. 179-186 (GESGAGKT) provides a ligand contact to ATP. Actin-binding regions lie at residues 638–660 (LASL…IPNN) and 738–752 (RFGI…GQLA). Positions 762–791 (ISEIIKAIQAATRGWIARKVYKQAREHTVA) constitute an IQ domain. Residues 817–2116 (ARPLLKRRNF…MADFFGGFKA (1300 aa)) are a coiled coil. 6 disordered regions span residues 1295–1314 (VNEQ…KRKV), 1363–1399 (DKSV…SKKK), 1415–1444 (TAKK…DAKN), 1711–1731 (VRDQ…SKRR), 1771–1791 (LEDE…LESE), and 1805–1844 (NRSR…AAKL). Composition is skewed to basic and acidic residues over residues 1375–1399 (KNEE…SKKK), 1415–1443 (TAKK…DDAK), and 1722–1731 (RSELEDSKRR). The segment covering 1805–1832 (NRSRAEKDRKKYEKDLKDTKYKLNDEAA) has biased composition (basic and acidic residues). Residues Thr1823, Thr1833, and Thr2029 each carry the phosphothreonine; by MHCK modification.

Belongs to the TRAFAC class myosin-kinesin ATPase superfamily. Myosin family. Myosin-2 heavy chain is two-headed. It self-assembles into filaments. Hexamer of 2 heavy chain subunits (MHC), 2 alkali light chain subunits (MLC) and 2 regulatory light chain subunits (MLC-2). Associates with elmoA. Post-translationally, phosphorylation inhibits thick filament formation and reduces the actin-activated ATPase activity.

The protein resides in the cytoplasm. Its subcellular location is the cell cortex. Myosin is a protein that binds to actin and has ATPase activity that is activated by actin. This is Myosin-2 heavy chain (mhcA) from Dictyostelium discoideum (Social amoeba).